The following is an 89-amino-acid chain: Putative regulatory protein CPE1749 (89 aa).

Belongs to the RemA family.

The protein is Putative regulatory protein CPE1749 of Clostridium perfringens (strain 13 / Type A).